Reading from the N-terminus, the 725-residue chain is MVMKASVDDDDSGWELSMPEKMEKSNTNWVDITQDFEEACRELKLGELLHDKLFGLFEAMSAIEMMDPKMDAGMIGNQVNRKVLNFEQAIKDGTIKIKDLTLPELIGIMDTCFCCLITWLEGHSLAQTVFTCLYIHNPDFIEDPAMKAFALGILKICDIAREKVNKAAVFEEEDFQSMTYGFKMANSVTDLRVTGMLKDVEDDMQRRVKSTRSRQGEERDPEVELEHQQCLAVFSRVKFTRVLLTVLIAFTKKETSAVAEAQKLMVQAADLLSAIHNSLHHGIQAQNDTTKGDHPIMMGFEPLVNQRLLPPTFPRYAKIIKREEMVSYFARLIDRIKTVCEVVNLTNLHCILDFFCEFSEQSPCVLSRSLLQTTFLVDNKKVFGTHLMQDMVKDALRSFVSPPVLSPKCYLYNNHQAKDCIDSFVTHCVRPFCSLIQIHGHNRARQRDKLGHILEEFATLQDEAEKVDAALHTMLLKQEPQRQHLACLGTWVLYHNLRIMIQYLLSGFELELYSMHEYYYIYWYLSEFLYAWLMSTLSRADGSQMAEERIMEEQQKGRSSKKTKKKKKVRPLSREITMSQAYQNMCAGMFKTMVAFDMDGKVRKPKFELDSEQVRYEHRFAPFNSVMTPPPVHYLQFKEMSDLNKYSPPPQSPELYVAASKHFQQAKMILENIPNPDHEVNRILKVAKPNFVVMKLLAGGHKKESKVPPEFDFSAHKYFPVVKLV.

At serine 187 the chain carries Phosphoserine. A disordered region spans residues 548 to 573 (ERIMEEQQKGRSSKKTKKKKKVRPLS). Positions 558-571 (RSSKKTKKKKKVRP) are enriched in basic residues.

It belongs to the MAK10 family. As to quaternary structure, component of the N-terminal acetyltransferase C (NatC) complex, which is composed of NAA35, NAA38 and NAA30.

The protein resides in the cytoplasm. Auxillary component of the N-terminal acetyltransferase C (NatC) complex which catalyzes acetylation of N-terminal methionine residues. N-terminal acetylation protects proteins from ubiquitination and degradation by the N-end rule pathway. Involved in regulation of apoptosis and proliferation of smooth muscle cells. In Macaca fascicularis (Crab-eating macaque), this protein is N-alpha-acetyltransferase 35, NatC auxiliary subunit (NAA35).